Consider the following 501-residue polypeptide: Protein translocase subunit SecD (501 aa).

Helical transmembrane passes span 9–29 (NLWL…YAVV), 339–359 (AIEQ…VVLI), 371–391 (ISIF…GATL), 394–414 (PGIA…VLIF), 447–467 (VTLL…VKGF), and 470–490 (TLAL…KVFL).

The protein belongs to the SecD/SecF family. SecD subfamily. As to quaternary structure, forms a complex with SecF. Part of the essential Sec protein translocation apparatus which comprises SecA, SecYEG and auxiliary proteins SecDF. Other proteins may also be involved.

It is found in the cell inner membrane. Part of the Sec protein translocase complex. Interacts with the SecYEG preprotein conducting channel. SecDF uses the proton motive force (PMF) to complete protein translocation after the ATP-dependent function of SecA. This chain is Protein translocase subunit SecD, found in Aquifex aeolicus (strain VF5).